A 450-amino-acid chain; its full sequence is UDP-N-acetylmuramoylalanine--D-glutamate ligase (450 aa).

Residue 119–125 participates in ATP binding; the sequence is GSNGKTT.

This sequence belongs to the MurCDEF family.

The protein resides in the cytoplasm. It carries out the reaction UDP-N-acetyl-alpha-D-muramoyl-L-alanine + D-glutamate + ATP = UDP-N-acetyl-alpha-D-muramoyl-L-alanyl-D-glutamate + ADP + phosphate + H(+). It participates in cell wall biogenesis; peptidoglycan biosynthesis. Functionally, cell wall formation. Catalyzes the addition of glutamate to the nucleotide precursor UDP-N-acetylmuramoyl-L-alanine (UMA). This Streptococcus pneumoniae (strain JJA) protein is UDP-N-acetylmuramoylalanine--D-glutamate ligase.